The sequence spans 143 residues: uncharacterized protein (143 aa).

2 consecutive transmembrane segments (helical) span residues 16–36 (LIFAQIFIGCLMYFMLIIFVW) and 48–68 (ICYIIIFAIIDFVVCFKFIYV). A glycan (N-linked (GlcNAc...) asparagine; by host) is linked at asparagine 71.

The protein localises to the membrane. This is an uncharacterized protein from Acanthamoeba polyphaga (Amoeba).